A 210-amino-acid polypeptide reads, in one-letter code: Cdc42 effector protein 2 (210 aa).

The residue at position 2 (Ser2) is an N-acetylserine. One can recognise a CRIB domain in the interval Ile30 to Gly44. Residues Ser31, Ser101, and Ser141 each carry the phosphoserine modification. The segment at Ala124–Ala145 is disordered.

This sequence belongs to the BORG/CEP family. Interacts with CDC42 and RHOQ, in a GTP-dependent manner, and with SEPT7.

It localises to the endomembrane system. The protein resides in the cytoplasm. Its subcellular location is the cytoskeleton. In terms of biological role, probably involved in the organization of the actin cytoskeleton. May act downstream of CDC42 to induce actin filament assembly leading to cell shape changes. Induces pseudopodia formation in fibroblasts in a CDC42-dependent manner. This chain is Cdc42 effector protein 2 (CDC42EP2), found in Bos taurus (Bovine).